A 190-amino-acid chain; its full sequence is FMRFamide-related peptides (190 aa).

The signal sequence occupies residues 1 to 21; it reads MSCSRTVALLAALWLVVGATS. The propeptide occupies 22–33; the sequence is SPVRRSPDLEAR. Phe45 is subject to Phenylalanine amide. A propeptide spanning residues 69–104 is cleaved from the precursor; sequence GNSFLRFGRSQPLTLSTDDLVSLLRAYEEDYDTPMT. Phe113 is modified (phenylalanine amide). A propeptide spanning residues 116 to 150 is cleaved from the precursor; that stretch reads DPNFIRLGRSADDDKSAFEQNSELVVSGYPQRKSR. Leu158 is modified (leucine amide). Residues 160-190 constitute a propeptide that is removed on maturation; sequence RDSEEVNENEFEETEESRRKRSADSCHDCQS. Residues 161-190 are disordered; it reads DSEEVNENEFEETEESRRKRSADSCHDCQS. Positions 164–174 are enriched in acidic residues; sequence EVNENEFEETE. Positions 175-190 are enriched in basic and acidic residues; that stretch reads ESRRKRSADSCHDCQS.

The protein belongs to the FARP (FMRFamide related peptide) family. As to expression, RFamide 1: Expressed in corpora cardiaca (CC), corpora allata (CA), antennal lobe (AL) and gnathal ganglion (GNG) (at protein level). Expression in AL detected in most animals, in CC, CA and in GNG in some animals (at protein level). RFamide precursor-related peptide 2: Expressed in corpora cardiaca (CC), corpora allata (CA), antennal lobe (AL) and gnathal ganglion (GNG) (at protein level). Expression in AL detected in some animals, expression in CC, CA and GNG in few animals (at protein level). RFamide 3: Expressed in corpora cardiaca (CC), corpora allata (CA), antennal lobe (AL) and gnathal ganglion (GNG) (at protein level). Expression in AL detected in all animals, in CC, CA and GNG in most animals (at protein level). RFamide 5: Expressed in corpora cardiaca (CC), corpora allata (CA), antennal lobe (AL) and gnathal ganglion (GNG) (at protein level). Expression in AL detected in all animals, in CC, CA and in GNG in some animals (at protein level).

The protein localises to the secreted. Functionally, in insects, FMRFamide and related peptides have modulatory actions at skeletal neuromuscular junctions, and peptides that are immunologically related to FMRFamide are released into the circulation from neurohemal organs. This Agrotis ipsilon (Black cutworm moth) protein is FMRFamide-related peptides.